The chain runs to 480 residues: uncharacterized protein (480 aa).

This is an uncharacterized protein from Xylella fastidiosa (strain 9a5c).